Here is a 296-residue protein sequence, read N- to C-terminus: Mycothiol acetyltransferase (296 aa).

2 consecutive N-acetyltransferase domains span residues arginine 8 to glutamate 146 and isoleucine 151 to valine 296. Glutamate 39 lines the 1D-myo-inositol 2-(L-cysteinylamino)-2-deoxy-alpha-D-glucopyranoside pocket. Valine 76–threonine 78 provides a ligand contact to acetyl-CoA. The 1D-myo-inositol 2-(L-cysteinylamino)-2-deoxy-alpha-D-glucopyranoside site is built by glutamate 178, lysine 220, and glutamate 228. Residues valine 232 to valine 234 and glutamine 239 to arginine 245 contribute to the acetyl-CoA site. Tyrosine 266 lines the 1D-myo-inositol 2-(L-cysteinylamino)-2-deoxy-alpha-D-glucopyranoside pocket.

This sequence belongs to the acetyltransferase family. MshD subfamily. In terms of assembly, monomer.

The catalysed reaction is 1D-myo-inositol 2-(L-cysteinylamino)-2-deoxy-alpha-D-glucopyranoside + acetyl-CoA = mycothiol + CoA + H(+). Catalyzes the transfer of acetyl from acetyl-CoA to desacetylmycothiol (Cys-GlcN-Ins) to form mycothiol. This chain is Mycothiol acetyltransferase, found in Kytococcus sedentarius (strain ATCC 14392 / DSM 20547 / JCM 11482 / CCUG 33030 / NBRC 15357 / NCTC 11040 / CCM 314 / 541) (Micrococcus sedentarius).